We begin with the raw amino-acid sequence, 84 residues long: Acyl-CoA-binding protein (84 aa).

Positions 1-84 (MTTFEEAAQK…LYEQLATKYA (84 aa)) constitute an ACB domain. Residues K12, 27-31 (YGLYK), K53, and Y72 each bind an acyl-CoA.

It belongs to the ACBP family. As to quaternary structure, interacts with dhkA.

Its function is as follows. Binds to acyl-CoA. Processed into the SDF-2 (spore differentiation factor 2) a peptide which triggers sporulation. SDF-2 appears to stimulate prestalk cells to release additional SDF-2 by acting through a signal transduction pathway that also involves dhkA, regA and PKA. Induces encapsulation of prespore cells in a dhkA-dependent manner. GABA induces the release of acbA from prespore cells and induces the exposure of tagC on the surface of prestalk cells where it can convert acbA to SDF-2. Glutamate acts as a competitive inhibitor and is also able to inhibit induction of sporulation by SDF-2. The polypeptide is Acyl-CoA-binding protein (acbA) (Dictyostelium discoideum (Social amoeba)).